The primary structure comprises 344 residues: Calcium homeostasis modulator protein 3 (344 aa).

Over 1-20 the chain is Cytoplasmic; it reads MDKFRMLFQHFQSSSESVMN. Residues 9–36 form a central pore region; it reads QHFQSSSESVMNGICLLLAAVTVKLYSS. Residues 21–36 form a helical membrane-spanning segment; sequence GICLLLAAVTVKLYSS. Over 37-48 the chain is Extracellular; sequence FDFNCPCLVHYN. 2 disulfide bridges follow: cysteine 41-cysteine 126 and cysteine 43-cysteine 157. Residues 49–71 form a helical membrane-spanning segment; the sequence is ALYGLGLLLTPPLALFLCGLLAN. At 72–98 the chain is on the cytoplasmic side; that stretch reads RQSVVMVEEWRRPAGHRRKDPGIIRYM. Cysteine 99 carries S-palmitoyl cysteine lipidation. A helical membrane pass occupies residues 99–124; that stretch reads CSSVLQRALAAPLVWILLALLDGKCF. The Extracellular portion of the chain corresponds to 125 to 176; the sequence is VCAFSSSVDPEKFLDFANMTPSQVQLFLAKVPCKEDELVRDSPARKAVSRYL. N-linked (GlcNAc...) asparagine glycosylation occurs at asparagine 142. Residues 177–202 traverse the membrane as a helical segment; sequence RCLSQAIGWSVTLLLIIAAFLARCLR. 2 S-palmitoyl cysteine lipidation sites follow: cysteine 200 and cysteine 204. Residues 203 to 344 lie on the Cytoplasmic side of the membrane; it reads PCFDQTVFLQ…GTRLSQHTDV (142 aa).

This sequence belongs to the CALHM family. As to quaternary structure, associates with CALHM1 as a pore-forming subunit in a hetero-hexameric channel complex. In terms of processing, N-glycosylated. Palmitoylated by ZDHHC3 and ZDHHC15. Palmitoylation positively regulates CALHM1:CALHM3 channel conductance. Specifically expressed in circumvallate taste bud cells.

The protein localises to the basolateral cell membrane. The catalysed reaction is ATP(in) = ATP(out). The enzyme catalyses Ca(2+)(in) = Ca(2+)(out). It carries out the reaction Na(+)(in) = Na(+)(out). It catalyses the reaction K(+)(in) = K(+)(out). The catalysed reaction is chloride(in) = chloride(out). Pore-forming subunit of gustatory voltage-gated ion channels required for sensory perception of sweet, bitter and umami tastes. With CALHM1 forms a fast-activating voltage-gated ATP-release channel in type II taste bud cells, ATP acting as a neurotransmitter to activate afferent neural gustatory pathways. Acts both as a voltage-gated and calcium-activated ion channel: mediates neuronal excitability in response to membrane depolarization and low extracellular Ca(2+) concentration. Has poor ion selectivity and forms a wide pore (around 14 Angstroms) that mediates permeation of small ions including Ca(2+), Na(+), K(+) and Cl(-), as well as larger ions such as ATP(4-). The sequence is that of Calcium homeostasis modulator protein 3 from Homo sapiens (Human).